The primary structure comprises 616 residues: Dihydroxy-acid dehydratase (616 aa).

Asp81 lines the Mg(2+) pocket. Cys122 lines the [2Fe-2S] cluster pocket. The Mg(2+) site is built by Asp123 and Lys124. At Lys124 the chain carries N6-carboxylysine. Cys197 contributes to the [2Fe-2S] cluster binding site. Glu493 is a binding site for Mg(2+). Ser519 serves as the catalytic Proton acceptor.

It belongs to the IlvD/Edd family. In terms of assembly, homodimer. [2Fe-2S] cluster serves as cofactor. The cofactor is Mg(2+).

The enzyme catalyses (2R)-2,3-dihydroxy-3-methylbutanoate = 3-methyl-2-oxobutanoate + H2O. The catalysed reaction is (2R,3R)-2,3-dihydroxy-3-methylpentanoate = (S)-3-methyl-2-oxopentanoate + H2O. Its pathway is amino-acid biosynthesis; L-isoleucine biosynthesis; L-isoleucine from 2-oxobutanoate: step 3/4. The protein operates within amino-acid biosynthesis; L-valine biosynthesis; L-valine from pyruvate: step 3/4. Functions in the biosynthesis of branched-chain amino acids. Catalyzes the dehydration of (2R,3R)-2,3-dihydroxy-3-methylpentanoate (2,3-dihydroxy-3-methylvalerate) into 2-oxo-3-methylpentanoate (2-oxo-3-methylvalerate) and of (2R)-2,3-dihydroxy-3-methylbutanoate (2,3-dihydroxyisovalerate) into 2-oxo-3-methylbutanoate (2-oxoisovalerate), the penultimate precursor to L-isoleucine and L-valine, respectively. In Corynebacterium kroppenstedtii (strain DSM 44385 / JCM 11950 / CIP 105744 / CCUG 35717), this protein is Dihydroxy-acid dehydratase.